The following is a 252-amino-acid chain: tRNA (guanine-N(1)-)-methyltransferase (252 aa).

S-adenosyl-L-methionine is bound by residues G113 and 133 to 138 (VGDFVL).

This sequence belongs to the RNA methyltransferase TrmD family. Homodimer.

It localises to the cytoplasm. The enzyme catalyses guanosine(37) in tRNA + S-adenosyl-L-methionine = N(1)-methylguanosine(37) in tRNA + S-adenosyl-L-homocysteine + H(+). In terms of biological role, specifically methylates guanosine-37 in various tRNAs. This Francisella tularensis subsp. holarctica (strain FTNF002-00 / FTA) protein is tRNA (guanine-N(1)-)-methyltransferase.